A 304-amino-acid polypeptide reads, in one-letter code: Bifunctional protein FolD (304 aa).

NADP(+) is bound by residues 176–178 (GAS), I201, and I242.

It belongs to the tetrahydrofolate dehydrogenase/cyclohydrolase family. Homodimer.

It catalyses the reaction (6R)-5,10-methylene-5,6,7,8-tetrahydrofolate + NADP(+) = (6R)-5,10-methenyltetrahydrofolate + NADPH. The catalysed reaction is (6R)-5,10-methenyltetrahydrofolate + H2O = (6R)-10-formyltetrahydrofolate + H(+). The protein operates within one-carbon metabolism; tetrahydrofolate interconversion. Its function is as follows. Catalyzes the oxidation of 5,10-methylenetetrahydrofolate to 5,10-methenyltetrahydrofolate and then the hydrolysis of 5,10-methenyltetrahydrofolate to 10-formyltetrahydrofolate. The protein is Bifunctional protein FolD of Gluconobacter oxydans (strain 621H) (Gluconobacter suboxydans).